Here is a 102-residue protein sequence, read N- to C-terminus: Small ribosomal subunit protein uS10 (102 aa).

This sequence belongs to the universal ribosomal protein uS10 family. Part of the 30S ribosomal subunit.

Its function is as follows. Involved in the binding of tRNA to the ribosomes. The protein is Small ribosomal subunit protein uS10 of Caulobacter sp. (strain K31).